Reading from the N-terminus, the 455-residue chain is Secreted triacylglycerol lipase LIP4 (455 aa).

Positions 1–19 (MKLNLFILGLLTLAAHAYA) are cleaved as a signal peptide. Asn98 is a glycosylation site (N-linked (GlcNAc...) asparagine). Cys115 and Cys284 are oxidised to a cystine. Ser197 serves as the catalytic Nucleophile. The N-linked (GlcNAc...) asparagine glycan is linked to Asn230. Residues Asp344 and His378 contribute to the active site. Cys360 and Cys406 are oxidised to a cystine.

This sequence belongs to the AB hydrolase superfamily. Lipase family. Class Lip subfamily.

The protein resides in the secreted. Its subcellular location is the cell wall. The enzyme catalyses a triacylglycerol + H2O = a diacylglycerol + a fatty acid + H(+). The catalysed reaction is a monoacylglycerol + H2O = glycerol + a fatty acid + H(+). It catalyses the reaction a diacylglycerol + H2O = a monoacylglycerol + a fatty acid + H(+). In terms of biological role, secreted lipase involved in Dandruff and seborrheic dermatitis (D/SD) probably via lipase-mediated breakdown of sebaceous lipids and release of irritating free fatty acids. Has triacylglycerol lipase activity and is able to hydrolyze triolein. Mostly converts monoolein to di- and triolein, while free fatty acids are only produced in low amounts. This is Secreted triacylglycerol lipase LIP4 from Malassezia globosa (strain ATCC MYA-4612 / CBS 7966) (Dandruff-associated fungus).